Here is a 197-residue protein sequence, read N- to C-terminus: Guanylate kinase (197 aa).

The segment at 1 to 30 (MAATPRGTSPVPPDARPRLTVLSGPSGVGK) is disordered. One can recognise a Guanylate kinase-like domain in the interval 17–197 (PRLTVLSGPS…RELLALTNVV (181 aa)). 24 to 31 (GPSGVGKS) serves as a coordination point for ATP.

Belongs to the guanylate kinase family.

The protein localises to the cytoplasm. It carries out the reaction GMP + ATP = GDP + ADP. Functionally, essential for recycling GMP and indirectly, cGMP. This chain is Guanylate kinase (gmk), found in Streptomyces coelicolor (strain ATCC BAA-471 / A3(2) / M145).